The primary structure comprises 343 residues: Dihydroorotase (343 aa).

Residues H14 and H16 each contribute to the Zn(2+) site. Substrate is bound by residues 16 to 18 and N42; that span reads HLR. K100, H137, and H175 together coordinate Zn(2+). The residue at position 100 (K100) is an N6-carboxylysine. H137 provides a ligand contact to substrate. Residue L220 participates in substrate binding. Residue D248 coordinates Zn(2+). D248 is an active-site residue. Substrate-binding residues include H252 and A264.

Belongs to the metallo-dependent hydrolases superfamily. DHOase family. Class II DHOase subfamily. Homodimer. It depends on Zn(2+) as a cofactor.

The catalysed reaction is (S)-dihydroorotate + H2O = N-carbamoyl-L-aspartate + H(+). It functions in the pathway pyrimidine metabolism; UMP biosynthesis via de novo pathway; (S)-dihydroorotate from bicarbonate: step 3/3. In terms of biological role, catalyzes the reversible cyclization of carbamoyl aspartate to dihydroorotate. The polypeptide is Dihydroorotase (Synechococcus sp. (strain CC9902)).